The sequence spans 318 residues: Ribosomal RNA small subunit methyltransferase H (318 aa).

Residues 34–36 (GGH), Asp53, Phe82, Asp103, and Gln110 contribute to the S-adenosyl-L-methionine site.

The protein belongs to the methyltransferase superfamily. RsmH family.

It is found in the cytoplasm. The catalysed reaction is cytidine(1402) in 16S rRNA + S-adenosyl-L-methionine = N(4)-methylcytidine(1402) in 16S rRNA + S-adenosyl-L-homocysteine + H(+). In terms of biological role, specifically methylates the N4 position of cytidine in position 1402 (C1402) of 16S rRNA. This is Ribosomal RNA small subunit methyltransferase H from Limosilactobacillus reuteri (strain DSM 20016) (Lactobacillus reuteri).